The sequence spans 201 residues: Large ribosomal subunit protein uL4 (201 aa).

The disordered stretch occupies residues 45–75; the sequence is AQKSRSEVSGSGKKPWRQKGTGRARSGSLRS.

The protein belongs to the universal ribosomal protein uL4 family. In terms of assembly, part of the 50S ribosomal subunit.

Its function is as follows. One of the primary rRNA binding proteins, this protein initially binds near the 5'-end of the 23S rRNA. It is important during the early stages of 50S assembly. It makes multiple contacts with different domains of the 23S rRNA in the assembled 50S subunit and ribosome. In terms of biological role, forms part of the polypeptide exit tunnel. This Buchnera aphidicola subsp. Cinara cedri (strain Cc) protein is Large ribosomal subunit protein uL4.